Reading from the N-terminus, the 301-residue chain is Ornithine carbamoyltransferase (301 aa).

Carbamoyl phosphate contacts are provided by residues Arg107 and 134–137; that span reads HPLQ. L-ornithine-binding positions include Asn165, Asp220, and 224 to 225; that span reads SM. Carbamoyl phosphate contacts are provided by residues 260–261 and Arg288; that span reads CL.

Belongs to the aspartate/ornithine carbamoyltransferase superfamily. OTCase family. In terms of assembly, homotrimer.

The protein resides in the cytoplasm. It catalyses the reaction carbamoyl phosphate + L-ornithine = L-citrulline + phosphate + H(+). It functions in the pathway amino-acid biosynthesis; L-arginine biosynthesis; L-arginine from L-ornithine and carbamoyl phosphate: step 1/3. With respect to regulation, inhibited by delta-N-phosphonoacetyl-L-ornithine. Reversibly catalyzes the transfer of the carbamoyl group from carbamoyl phosphate (CP) to the N(epsilon) atom of ornithine (ORN) to produce L-citrulline, which is a substrate for argininosuccinate synthetase, the enzyme involved in the final step in arginine biosynthesis. The sequence is that of Ornithine carbamoyltransferase from Thermus thermophilus (strain ATCC BAA-163 / DSM 7039 / HB27).